The chain runs to 727 residues: Prolyl endopeptidase-like (727 aa).

Position 1 is an N-acetylmethionine (Met-1). Active-site charge relay system residues include Ser-559, Asp-645, and His-690.

It belongs to the peptidase S9A family. In terms of assembly, homodimer. Interacts with the AP-1 complex. In terms of tissue distribution, expressed in pyramidal neurons of the temporal cortex and neocortex (at protein level). Widely expressed. Expressed at higher level in brain, skeletal muscle, heart and kidney. Expressed at the endplates in the neuromuscular junction.

Its subcellular location is the cytoplasm. The protein resides in the cytosol. The protein localises to the golgi apparatus. It localises to the trans-Golgi network. It is found in the cytoskeleton. Its subcellular location is the nucleus. Inhibited by PMSF and Prefabloc, as well as leupeptin at high concentrations. Partially inhibited by TPCK, a chymotrypsin inhibitor and E64, a cysteine protease inhibitor. Not affected by 4-amidinophenyl-methanesulfonyl fluoride (APMSF), pepstatin or EDTA. Inhibited by 1-isobutyl-3-oxo-3,5,6,7-tetrahydro-2H-cyclopenta[c]pyridine-4-carbonitrile. Functionally, serine peptidase whose precise substrate specificity remains unclear. Does not cleave peptides after a arginine or lysine residue. Regulates trans-Golgi network morphology and sorting by regulating the membrane binding of the AP-1 complex. May play a role in the regulation of synaptic vesicle exocytosis. This is Prolyl endopeptidase-like (PREPL) from Homo sapiens (Human).